The chain runs to 557 residues: E3 ubiquitin-protein ligase ARIH1 (557 aa).

Residues 1 to 47 (MDSDEGYNYEFDEDEECSEEDSGAEEEEDEDDDEPDDDTLDLGEVEL) show a composition bias toward acidic residues. The interval 1–95 (MDSDEGYNYE…GGGGGPGHEQ (95 aa)) is disordered. Gly residues predominate over residues 65–92 (ETGGGGGSALGPGGGGGGGGGGGGGGPG). The tract at residues 105–153 (TAEQILQHMVECIREVNEVIQNPATITRILLSHFNWDKEKLMERYFDGN) is UBA-like. N6-acetyllysine is present on Lys-142. The interval 182 to 393 (QDMPCQICYL…SAWYNCNRYN (212 aa)) is TRIAD supradomain. The Zn(2+) site is built by Cys-186, Cys-189, Cys-203, His-205, Cys-208, Cys-211, Cys-231, Cys-236, Cys-276, Cys-281, Cys-297, Cys-299, Cys-304, Cys-307, His-312, Cys-317, Cys-344, and Cys-347. The RING-type 1 zinc finger occupies 186–236 (CQICYLNYPNSYFTGLECGHKFCMQCWSEYLTTKIMEEGMGQTISCPAHGC). The IBR-type zinc finger occupies 256–317 (LKYQHLITNS…GENWHDPVKC (62 aa)). An RING-type 2; atypical zinc finger spans residues 344 to 375 (CPKCHVTIEKDGGCNHMVCRNQNCKAEFCWVC). Cys-357 is an active-site residue. Residues Cys-362, Cys-367, Cys-372, Cys-375, His-382, and Cys-389 each contribute to the Zn(2+) site. Positions 408–557 (RAALQRYLFY…EKDLWEYIED (150 aa)) are ariadne domain.

The protein belongs to the RBR family. Ariadne subfamily. Interacts (via the first RING-type zinc finger) with UBE2L3. Associates with cullin-RING ubiquitin ligase (CRL) complexes containing CUL1, CUL2 and CUL3. Interacts with neddylated CUL1. Interacts with neddylated CUL2. Interacts with neddylated CUL3. Interacts with neddylated CUL4A. In terms of tissue distribution, widely expressed.

It localises to the cytoplasm. Its subcellular location is the nucleus. It is found in the cajal body. The catalysed reaction is [E2 ubiquitin-conjugating enzyme]-S-ubiquitinyl-L-cysteine + [acceptor protein]-L-lysine = [E2 ubiquitin-conjugating enzyme]-L-cysteine + [acceptor protein]-N(6)-ubiquitinyl-L-lysine.. It participates in protein modification; protein ubiquitination. Autoinhibited by the ariadne domain, which masks the second RING-type zinc finger that contains the active site and inhibits the E3 activity. Inhibition is relieved upon binding to neddylated cullin-RING ubiquitin ligase complexes, which activate the E3 ligase activity of ARIH1. Functionally, E3 ubiquitin-protein ligase, which catalyzes ubiquitination of target proteins together with ubiquitin-conjugating enzyme E2 UBE2L3. Acts as an atypical E3 ubiquitin-protein ligase by working together with cullin-RING ubiquitin ligase (CRL) complexes and initiating ubiquitination of CRL substrates: associates with CRL complexes and specifically mediates addition of the first ubiquitin on CRLs targets. The initial ubiquitin is then elongated by CDC34/UBE2R1 and UBE2R2. E3 ubiquitin-protein ligase activity is activated upon binding to neddylated cullin-RING ubiquitin ligase complexes. Plays a role in protein translation in response to DNA damage by mediating ubiquitination of EIF4E2, the consequences of EIF4E2 ubiquitination are however unclear. According to a report, EIF4E2 ubiquitination leads to promote EIF4E2 cap-binding and protein translation arrest. According to another report EIF4E2 ubiquitination leads to its subsequent degradation. Acts as the ligase involved in ISGylation of EIF4E2. In vitro, controls the degradation of the LINC (LInker of Nucleoskeleton and Cytoskeleton) complex member SUN2 and may therefore have a role in the formation and localization of the LINC complex, and as a consequence, nuclear subcellular localization and nuclear morphology. The polypeptide is E3 ubiquitin-protein ligase ARIH1 (Homo sapiens (Human)).